We begin with the raw amino-acid sequence, 270 residues long: Putative tRNA (cytidine(32)/guanosine(34)-2'-O)-methyltransferase (270 aa).

Residues G53, W55, D78, D94, and D119 each coordinate S-adenosyl-L-methionine. K159 serves as the catalytic Proton acceptor.

It belongs to the class I-like SAM-binding methyltransferase superfamily. RNA methyltransferase RlmE family. TRM7 subfamily.

The protein localises to the cytoplasm. It carries out the reaction cytidine(32)/guanosine(34) in tRNA + 2 S-adenosyl-L-methionine = 2'-O-methylcytidine(32)/2'-O-methylguanosine(34) in tRNA + 2 S-adenosyl-L-homocysteine + 2 H(+). Its function is as follows. Methylates the 2'-O-ribose of nucleotides at positions 32 and 34 of the tRNA anticodon loop of substrate tRNAs. In Dictyostelium discoideum (Social amoeba), this protein is Putative tRNA (cytidine(32)/guanosine(34)-2'-O)-methyltransferase (fsjA).